The chain runs to 502 residues: Chromosomal replication initiator protein DnaA (502 aa).

The interval 1-112 (MADDLSLGFT…PSTDHIDDNS (112 aa)) is domain I, interacts with DnaA modulators. Residues 113-161 (SSADVLLTDDCGTDTDENYGEPLTGEYQGLPTYFTERPHHTESTVTGGT) are domain II. The interval 162-378 (SLNRRYTFET…GALIRVTAFA (217 aa)) is domain III, AAA+ region. ATP is bound by residues Gly206, Gly208, Lys209, and Thr210. The interval 379–502 (SLNKTAIDKA…TTRIRQRSKR (124 aa)) is domain IV, binds dsDNA.

This sequence belongs to the DnaA family. In terms of assembly, oligomerizes as a right-handed, spiral filament on DNA at oriC.

Its subcellular location is the cytoplasm. Plays an essential role in the initiation and regulation of chromosomal replication. ATP-DnaA binds to the origin of replication (oriC) to initiate formation of the DNA replication initiation complex once per cell cycle. Binds the DnaA box (a 9 base pair repeat at the origin) and separates the double-stranded (ds)DNA. Forms a right-handed helical filament on oriC DNA; dsDNA binds to the exterior of the filament while single-stranded (ss)DNA is stabiized in the filament's interior. The ATP-DnaA-oriC complex binds and stabilizes one strand of the AT-rich DNA unwinding element (DUE), permitting loading of DNA polymerase. After initiation quickly degrades to an ADP-DnaA complex that is not apt for DNA replication. Binds acidic phospholipids. The protein is Chromosomal replication initiator protein DnaA of Mycobacterium leprae (strain TN).